Here is a 547-residue protein sequence, read N- to C-terminus: Probable bifunctional tRNA threonylcarbamoyladenosine biosynthesis protein (547 aa).

Positions 1–329 (MKNTFILGIE…FRTDDVNVTW (329 aa)) are kae1. Positions 113, 117, and 134 each coordinate Fe cation. Residues 134–138 (YVSGA), D166, G179, E183, and N262 contribute to the L-threonylcarbamoyladenylate site. D290 is a Fe cation binding site. Positions 340 to 547 (EISPEAFLRA…EEIKKRARYA (208 aa)) constitute a Protein kinase domain. Residues 355 to 363 (LDNGAEAVI) and K377 contribute to the ATP site. The Proton acceptor; for kinase activity role is filled by D464.

This sequence in the N-terminal section; belongs to the KAE1 / TsaD family. In the C-terminal section; belongs to the protein kinase superfamily. Tyr protein kinase family. BUD32 subfamily. Component of the KEOPS complex that consists of Kae1, Bud32, Cgi121 and Pcc1; the whole complex dimerizes. Requires Fe(2+) as cofactor.

Its subcellular location is the cytoplasm. It carries out the reaction L-seryl-[protein] + ATP = O-phospho-L-seryl-[protein] + ADP + H(+). The enzyme catalyses L-threonyl-[protein] + ATP = O-phospho-L-threonyl-[protein] + ADP + H(+). The catalysed reaction is L-threonylcarbamoyladenylate + adenosine(37) in tRNA = N(6)-L-threonylcarbamoyladenosine(37) in tRNA + AMP + H(+). Required for the formation of a threonylcarbamoyl group on adenosine at position 37 (t(6)A37) in tRNAs that read codons beginning with adenine. Is a component of the KEOPS complex that is probably involved in the transfer of the threonylcarbamoyl moiety of threonylcarbamoyl-AMP (TC-AMP) to the N6 group of A37. The Kae1 domain likely plays a direct catalytic role in this reaction. The Bud32 domain probably displays kinase activity that regulates Kae1 function. This is Probable bifunctional tRNA threonylcarbamoyladenosine biosynthesis protein from Methanosarcina acetivorans (strain ATCC 35395 / DSM 2834 / JCM 12185 / C2A).